The sequence spans 89 residues: UPF0250 protein CV_3095 (89 aa).

It belongs to the UPF0250 family.

In Chromobacterium violaceum (strain ATCC 12472 / DSM 30191 / JCM 1249 / CCUG 213 / NBRC 12614 / NCIMB 9131 / NCTC 9757 / MK), this protein is UPF0250 protein CV_3095.